We begin with the raw amino-acid sequence, 233 residues long: High-affinity branched-chain amino acid transport ATP-binding protein BraG (233 aa).

Positions 2-233 (LSFDKVSTYY…PKVRDAYLGG (232 aa)) constitute an ABC transporter domain. 34 to 41 (GANGAGKS) lines the ATP pocket.

The protein belongs to the ABC transporter superfamily.

It is found in the cell inner membrane. Functionally, component of the high affinity leucine, isoleucine, valine, transport system (LIV-I), which is operative without Na(+) and is specific for alanine and threonine, in addition to branched-chain amino acids. The sequence is that of High-affinity branched-chain amino acid transport ATP-binding protein BraG (braG) from Pseudomonas aeruginosa (strain ATCC 15692 / DSM 22644 / CIP 104116 / JCM 14847 / LMG 12228 / 1C / PRS 101 / PAO1).